The following is a 146-amino-acid chain: Small ribosomal subunit protein uS13A (146 aa).

Serine 2 bears the N-acetylserine mark. Lysine 36 is covalently cross-linked (Glycyl lysine isopeptide (Lys-Gly) (interchain with G-Cter in ubiquitin)). Position 48 is an N6-methyllysine; by RKM1 (lysine 48). Glycyl lysine isopeptide (Lys-Gly) (interchain with G-Cter in ubiquitin) cross-links involve residues lysine 49, lysine 80, and lysine 96.

The protein belongs to the universal ribosomal protein uS13 family. In terms of assembly, component of the small ribosomal subunit (SSU). Mature yeast ribosomes consist of a small (40S) and a large (60S) subunit. The 40S small subunit contains 1 molecule of ribosomal RNA (18S rRNA) and 33 different proteins (encoded by 57 genes). The large 60S subunit contains 3 rRNA molecules (25S, 5.8S and 5S rRNA) and 46 different proteins (encoded by 81 genes). Post-translationally, N-terminally acetylated by acetyltransferase NatA.

Its subcellular location is the cytoplasm. In terms of biological role, component of the ribosome, a large ribonucleoprotein complex responsible for the synthesis of proteins in the cell. The small ribosomal subunit (SSU) binds messenger RNAs (mRNAs) and translates the encoded message by selecting cognate aminoacyl-transfer RNA (tRNA) molecules. The large subunit (LSU) contains the ribosomal catalytic site termed the peptidyl transferase center (PTC), which catalyzes the formation of peptide bonds, thereby polymerizing the amino acids delivered by tRNAs into a polypeptide chain. The nascent polypeptides leave the ribosome through a tunnel in the LSU and interact with protein factors that function in enzymatic processing, targeting, and the membrane insertion of nascent chains at the exit of the ribosomal tunnel. The polypeptide is Small ribosomal subunit protein uS13A (Saccharomyces cerevisiae (strain ATCC 204508 / S288c) (Baker's yeast)).